A 518-amino-acid polypeptide reads, in one-letter code: Nuclear receptor ROR-gamma (518 aa).

The modulating stretch occupies residues methionine 1–proline 30. 2 NR C4-type zinc fingers span residues cysteine 31–cysteine 51 and cysteine 67–cysteine 91. Residues cysteine 31–methionine 96 constitute a DNA-binding region (nuclear receptor). Disordered regions lie at residues arginine 105–glycine 183 and histidine 238–serine 258. Basic and acidic residues predominate over residues lysine 109–valine 118. Low complexity predominate over residues glutamine 119–glutamine 130. One can recognise an NR LBD domain in the interval glutamate 269–threonine 508. The AF-2 motif lies at leucine 501–phenylalanine 506.

This sequence belongs to the nuclear hormone receptor family. NR1 subfamily. In terms of assembly, interacts (via AF-2 motif) with the coactivator NCOA2 (via LXXLL motif). Interacts with the corepressor NCOR1. Interacts with CRY1. Interacts (via AF-2 motif) with the coactivators NCOA1 and PPARGC1A (via LXXLL motif). Interacts (via AF-2 motif) with PROX1. Interacts with FOXP3. Interacts with NR0B2. Isoform 1 is widely expressed in many tissues, including liver and adipose, and highly expressed in skeletal muscle. Isoform 2 is primarily expressed in immature thymocytes.

It is found in the nucleus. Functionally, nuclear receptor that binds DNA as a monomer to ROR response elements (RORE) containing a single core motif half-site 5'-AGGTCA-3' preceded by a short A-T-rich sequence. Key regulator of cellular differentiation, immunity, peripheral circadian rhythm as well as lipid, steroid, xenobiotics and glucose metabolism. Considered to have intrinsic transcriptional activity, have some natural ligands like oxysterols that act as agonists (25-hydroxycholesterol) or inverse agonists (7-oxygenated sterols), enhancing or repressing the transcriptional activity, respectively. Recruits distinct combinations of cofactors to target gene regulatory regions to modulate their transcriptional expression, depending on the tissue, time and promoter contexts. Regulates the circadian expression of clock genes such as CRY1, BMAL1 and NR1D1 in peripheral tissues and in a tissue-selective manner. Competes with NR1D1 for binding to their shared DNA response element on some clock genes such as BMAL1, CRY1 and NR1D1 itself, resulting in NR1D1-mediated repression or RORC-mediated activation of the expression, leading to the circadian pattern of clock genes expression. Therefore influences the period length and stability of the clock. Involved in the regulation of the rhythmic expression of genes involved in glucose and lipid metabolism, including PLIN2 and AVPR1A. Negative regulator of adipocyte differentiation through the regulation of early phase genes expression, such as MMP3. Controls adipogenesis as well as adipocyte size and modulates insulin sensitivity in obesity. In liver, has specific and redundant functions with RORA as positive or negative modulator of expression of genes encoding phase I and Phase II proteins involved in the metabolism of lipids, steroids and xenobiotics, such as SULT1E1. Also plays a role in the regulation of hepatocyte glucose metabolism through the regulation of G6PC1 and PCK1. Regulates the rhythmic expression of PROX1 and promotes its nuclear localization. Plays an indispensable role in the induction of IFN-gamma dependent anti-mycobacterial systemic immunity. Essential for thymopoiesis and the development of several secondary lymphoid tissues, including lymph nodes and Peyer's patches. Required for the generation of LTi (lymphoid tissue inducer) cells. Regulates thymocyte survival through DNA-binding on ROREs of target gene promoter regions and recruitment of coactivaros via the AF-2. Also plays a key role, downstream of IL6 and TGFB and synergistically with RORA, for lineage specification of uncommitted CD4(+) T-helper (T(H)) cells into T(H)17 cells, antagonizing the T(H)1 program. Probably regulates IL17 and IL17F expression on T(H) by binding to the essential enhancer conserved non-coding sequence 2 (CNS2) in the IL17-IL17F locus. May also play a role in the pre-TCR activation cascade leading to the maturation of alpha/beta T-cells and may participate in the regulation of DNA accessibility in the TCR-J(alpha) locus. In Homo sapiens (Human), this protein is Nuclear receptor ROR-gamma (RORC).